The sequence spans 570 residues: Interleukin-1 receptor accessory protein (570 aa).

A signal peptide spans 1-20 (MTLLWCVVSLYFYGILQSDA). Ig-like C2-type domains follow at residues 21–128 (SERC…VAFP), 136–226 (SCFN…FHLT), and 242–350 (PPVI…VKQK). Topologically, residues 21–367 (SERCDDWGLD…VELACGFGAT (347 aa)) are extracellular. 5 disulfides stabilise this stretch: C24–C122, C47–C114, C137–C181, C160–C212, and C266–C332. A glycan (N-linked (GlcNAc...) asparagine) is linked at N57. The interval 69 to 85 (IWYWTRQDRDLEEPINF) is essential for interaction with PTPRD. 3 N-linked (GlcNAc...) asparagine glycosylation sites follow: N107, N111, and N118. Residues N196, N209, and N299 are each glycosylated (N-linked (GlcNAc...) asparagine). A helical membrane pass occupies residues 368-388 (VLLVVILIVVYHVYWLEMVLF). At 389-570 (YRAHFGTDET…GLSYSSLKNV (182 aa)) the chain is on the cytoplasmic side. Residues 403 to 546 (KEYDIYVSYA…RFWKQLQVAM (144 aa)) form the TIR domain. The active site involves E482. The disordered stretch occupies residues 549–570 (KKSPRRSSSDEQGLSYSSLKNV). S557 carries the post-translational modification Phosphoserine. A compositionally biased stretch (polar residues) spans 558–570 (DEQGLSYSSLKNV).

Belongs to the interleukin-1 receptor family. In terms of assembly, the interleukin-36 receptor complex is a heterodimer of IL1RL2 and IL1RAP; the association is inhibited by IL36RN. The interleukin-1 receptor complex is a heterodimer of IL1R1 and IL1RAP. Associates with IL1R2 to form a non-signaling interleukin-1 receptor complex. Interacts with IL-33-bound IL1RL1 to form the minimal interleukin-33 signaling complex with a 1:1:1 stoichiometry. Interacts with KIT (independently of stimulation with KITLG/SCF). A mast cell-specific KITLG/SCF-induced interleukin-33 signaling complex contains IL1RL1, IL1RAP, KIT and MYD88. Interacts (via the first immunoglobilin domain) with PTPRD (via the third immunoglobilin domain); induces pre- and postsynaptic differentiation of neurons.

Its subcellular location is the cell membrane. It is found in the secreted. The catalysed reaction is NAD(+) + H2O = ADP-D-ribose + nicotinamide + H(+). Coreceptor for IL1RL2 in the IL-36 signaling system. Coreceptor with IL1R1 in the IL-1 signaling system. Associates with IL1R1 bound to IL1B to form the high affinity interleukin-1 receptor complex which mediates interleukin-1-dependent activation of NF-kappa-B and other pathways. Signaling involves the recruitment of adapter molecules such as TOLLIP, MYD88, and IRAK1 or IRAK2 via the respective TIR domains of the receptor/coreceptor subunits. Recruits TOLLIP to the signaling complex. Does not bind to interleukin-1 alone; binding of IL1RN to IL1R1, prevents its association with IL1R1 to form a signaling complex. The cellular response is modulated through a non-signaling association with the membrane IL1R2 decoy receptor. Coreceptor for IL1RL1 in the IL-33 signaling system. Can bidirectionally induce pre- and postsynaptic differentiation of neurons by trans-synaptically binding to PTPRD. May play a role in IL1B-mediated costimulation of IFNG production from T-helper 1 (Th1) cells. Its function is as follows. Associates with secreted ligand-bound IL1R2 and increases the affinity of secreted IL1R2 for IL1B; this complex formation may be the dominant mechanism for neutralization of IL1B by secreted/soluble receptors. Enhances the ability of secreted IL1R1 to inhibit IL-33 signaling. In Macaca mulatta (Rhesus macaque), this protein is Interleukin-1 receptor accessory protein (IL1RAP).